The chain runs to 350 residues: Uroporphyrinogen decarboxylase (350 aa).

Residues 28-32 (RQAGR), Phe47, Asp78, Tyr155, Ser210, and His325 each bind substrate.

This sequence belongs to the uroporphyrinogen decarboxylase family. Homodimer.

It is found in the cytoplasm. The enzyme catalyses uroporphyrinogen III + 4 H(+) = coproporphyrinogen III + 4 CO2. Its pathway is porphyrin-containing compound metabolism; protoporphyrin-IX biosynthesis; coproporphyrinogen-III from 5-aminolevulinate: step 4/4. Functionally, catalyzes the decarboxylation of four acetate groups of uroporphyrinogen-III to yield coproporphyrinogen-III. This Nostoc sp. (strain PCC 7120 / SAG 25.82 / UTEX 2576) protein is Uroporphyrinogen decarboxylase.